A 904-amino-acid chain; its full sequence is Endoplasmic reticulum metallopeptidase 1 (904 aa).

Position 1 is an N-acetylmethionine (Met-1). At 1–63 (MEWGSESAAV…PGGSGGASRG (63 aa)) the chain is on the cytoplasmic side. The disordered stretch occupies residues 1–65 (MEWGSESAAV…GSGGASRGAG (65 aa)). Gly residues predominate over residues 55-65 (GGSGGASRGAG). The chain crosses the membrane as a helical span at residues 64 to 84 (AGTGLSEVRAALGLALYLIAL). The Lumenal portion of the chain corresponds to 85-399 (RTLVQLSLQQ…AASKYRHGNM (315 aa)). N-linked (GlcNAc...) asparagine glycosylation is present at Asn-182. Cys-204 and Cys-222 form a disulfide bridge. 2 residues coordinate Zn(2+): His-205 and Asp-217. Catalysis depends on Glu-251, which acts as the Proton acceptor. Residues Glu-252, Glu-278, and His-354 each contribute to the Zn(2+) site. Residues 400–420 (VFFDVLGLFVIAYPSRIGSII) form a helical membrane-spanning segment. Residues 421–457 (NYMVVMGVVLYLGKKFLQPKHKTGNYKKDFLCGLGIT) are Cytoplasmic-facing. Residues 458–478 (LISWFTSLVTVLIIAVFISLI) traverse the membrane as a helical segment. Topologically, residues 479–489 (GQSLSWYNHFY) are lumenal. Residues 490 to 510 (VSVCLYGTATVAKIILIHTLA) form a helical membrane-spanning segment. The Cytoplasmic portion of the chain corresponds to 511 to 519 (KRFYYMNAS). A helical transmembrane segment spans residues 520-540 (AQYLGEVFFDISLFVHCCFLV). A topological domain (lumenal) is located at residue Thr-541. The helical transmembrane segment at 542 to 562 (LTYQGLCSAFISAVWVAFPLL) threads the bilayer. Residues 563-579 (TKLCVHKDFKQHGAQGK) lie on the Cytoplasmic side of the membrane. The helical transmembrane segment at 580-600 (FIAFYLLGMFIPYLYALYLIW) threads the bilayer. Topologically, residues 601-621 (AVFEMFTPILGRSGSEIPPDV) are lumenal. The chain crosses the membrane as a helical span at residues 622–642 (VLASILAGCTMILSSYFINFI). Residues 643 to 651 (YLAKSTKKT) are Cytoplasmic-facing. Residues 652 to 672 (MLTLTLVCAITFLLVCSGTFF) traverse the membrane as a helical segment. Residues 673–904 (PYSSNPANPK…WVCTYDLFVF (232 aa)) are Lumenal-facing. Residue Asn-730 is glycosylated (N-linked (GlcNAc...) asparagine).

It belongs to the peptidase M28 family. Requires Zn(2+) as cofactor.

The protein localises to the endoplasmic reticulum membrane. Its function is as follows. Within the ovary, required for the organization of somatic cells and oocytes into discrete follicular structures. This is Endoplasmic reticulum metallopeptidase 1 from Homo sapiens (Human).